A 367-amino-acid polypeptide reads, in one-letter code: Alcohol dehydrogenase 2 (367 aa).

Zn(2+) is bound by residues Cys48, His74, Cys107, Cys110, Cys113, Cys121, and Cys163. NAD(+)-binding positions include Gly187–Gly193, Asp212, Lys216, Val286–Ile288, and Arg361.

Belongs to the zinc-containing alcohol dehydrogenase family. Homotetramer. Zn(2+) is required as a cofactor.

Its subcellular location is the cytoplasm. The enzyme catalyses a primary alcohol + NAD(+) = an aldehyde + NADH + H(+). The catalysed reaction is a secondary alcohol + NAD(+) = a ketone + NADH + H(+). The polypeptide is Alcohol dehydrogenase 2 (alcB) (Emericella nidulans (strain FGSC A4 / ATCC 38163 / CBS 112.46 / NRRL 194 / M139) (Aspergillus nidulans)).